We begin with the raw amino-acid sequence, 377 residues long: Erythronate-4-phosphate dehydrogenase (377 aa).

2 residues coordinate substrate: Ser45 and Thr67. NAD(+) contacts are provided by residues 127–128, Asp147, and Thr176; that span reads QV. The active site involves Arg209. Residue Asp233 coordinates NAD(+). Glu238 is a catalytic residue. His255 functions as the Proton donor in the catalytic mechanism. An NAD(+)-binding site is contributed by Gly258. Tyr259 is a binding site for substrate.

Belongs to the D-isomer specific 2-hydroxyacid dehydrogenase family. PdxB subfamily. As to quaternary structure, homodimer.

The protein localises to the cytoplasm. It carries out the reaction 4-phospho-D-erythronate + NAD(+) = (R)-3-hydroxy-2-oxo-4-phosphooxybutanoate + NADH + H(+). It participates in cofactor biosynthesis; pyridoxine 5'-phosphate biosynthesis; pyridoxine 5'-phosphate from D-erythrose 4-phosphate: step 2/5. In terms of biological role, catalyzes the oxidation of erythronate-4-phosphate to 3-hydroxy-2-oxo-4-phosphonooxybutanoate. This is Erythronate-4-phosphate dehydrogenase from Vibrio vulnificus (strain YJ016).